An 83-amino-acid chain; its full sequence is Normal mucosa of esophagus-specific gene 1 protein (83 aa).

The protein belongs to the complex I NDUFA4 subunit family.

Its subcellular location is the nucleus. The chain is Normal mucosa of esophagus-specific gene 1 protein (Nmes1) from Rattus norvegicus (Rat).